The following is a 599-amino-acid chain: Sulfite reductase [NADPH] flavoprotein alpha-component (599 aa).

The Flavodoxin-like domain occupies 64–202 (ITIISASQTG…AASEWRARVV (139 aa)). FMN-binding positions include 70–75 (SQTGNA), 117–120 (STQG), and 153–162 (LGDSSYEFFC). Residues 234–448 (DSPLVASLSV…IEHNDNFRLP (215 aa)) form the FAD-binding FR-type domain. Residues Thr-322, Ala-356, 386–389 (RLYS), 404–406 (TVG), Tyr-410, and 419–422 (GGAS) contribute to the FAD site. NADP(+) contacts are provided by residues 519-520 (SR), 525-529 (KVYVQ), and Asp-561. Tyr-599 provides a ligand contact to FAD.

Belongs to the NADPH-dependent sulphite reductase flavoprotein subunit CysJ family. It in the N-terminal section; belongs to the flavodoxin family. This sequence in the C-terminal section; belongs to the flavoprotein pyridine nucleotide cytochrome reductase family. Alpha(8)-beta(8). The alpha component is a flavoprotein, the beta component is a hemoprotein. It depends on FAD as a cofactor. Requires FMN as cofactor.

The catalysed reaction is hydrogen sulfide + 3 NADP(+) + 3 H2O = sulfite + 3 NADPH + 4 H(+). It functions in the pathway sulfur metabolism; hydrogen sulfide biosynthesis; hydrogen sulfide from sulfite (NADPH route): step 1/1. Its function is as follows. Component of the sulfite reductase complex that catalyzes the 6-electron reduction of sulfite to sulfide. This is one of several activities required for the biosynthesis of L-cysteine from sulfate. The flavoprotein component catalyzes the electron flow from NADPH -&gt; FAD -&gt; FMN to the hemoprotein component. This is Sulfite reductase [NADPH] flavoprotein alpha-component from Escherichia coli O9:H4 (strain HS).